We begin with the raw amino-acid sequence, 88 residues long: Apolipoprotein C-I (88 aa).

An N-terminal signal peptide occupies residues 1-26 (MRLFLSLPVWVAVLAMVLEGPAPAQA).

It belongs to the apolipoprotein C1 family.

The protein localises to the secreted. Inhibitor of lipoprotein binding to the low density lipoprotein (LDL) receptor, LDL receptor-related protein, and very low density lipoprotein (VLDL) receptor. Associates with high density lipoproteins (HDL) and the triacylglycerol-rich lipoproteins in the plasma and makes up about 10% of the protein of the VLDL and 2% of that of HDL. Appears to interfere directly with fatty acid uptake and is also the major plasma inhibitor of cholesteryl ester transfer protein (CETP). Binds free fatty acids and reduces their intracellular esterification. Modulates the interaction of APOE with beta-migrating VLDL and inhibits binding of beta-VLDL to the LDL receptor-related protein. This chain is Apolipoprotein C-I (APOC1), found in Ursus maritimus (Polar bear).